The primary structure comprises 516 residues: Effector protein hopAB1 (516 aa).

2 disordered regions span residues 1 to 93 (MSGI…AQPA) and 175 to 259 (RALA…DEAL). Over residues 16–30 (WRADDEPVTERERDS) the composition is skewed to basic and acidic residues. Residues 31–41 (SSGANLTNSPQ) are compositionally biased toward polar residues. Residues 81–90 (PVEPRQPPEA) are compositionally biased toward pro residues. Composition is skewed to low complexity over residues 183–196 (PAPSRPVASSSRSS) and 212–224 (QTSSSSQATSSTS).

This sequence belongs to the HopAB family.

It localises to the secreted. In terms of biological role, effector protein that plays different roles depending on the species and plant cultivars that interact with the pathogen. Acts as a virulence determinant by enhancing the development of disease symptoms and bacterial growth. Acts as an avirulence factor by eliciting hypersensitive response (HR) and plant resistance. The sequence is that of Effector protein hopAB1 (hopAB1) from Pseudomonas syringae pv. syringae (strain B728a).